Consider the following 492-residue polypeptide: GMP reductase (492 aa).

Residues 30-31 (SR) and arginine 78 contribute to the NADP(+) site. CBS domains follow at residues 99 to 162 (LIED…LVET) and 164 to 223 (MTPV…LNAT). NADP(+)-binding positions include 260–262 (DIA) and 313–314 (VG). The K(+) site is built by glycine 314, glycine 316, and cysteine 319. Cysteine 319 serves as the catalytic Thioimidate intermediate. Threonine 321 functions as the Proton donor/acceptor in the catalytic mechanism. Arginine 322 is a binding site for K(+). Residues 352 to 354 (DGG), 375 to 376 (GN), and 401 to 403 (GMA) contribute to the GMP site. Residues methionine 402 and 454 to 457 (SGIS) each bind NADP(+). The short motif at 490–492 (SKL) is the Microbody targeting signal element.

This sequence belongs to the IMPDH/GMPR family. GuaC type 1 subfamily. Homotetramer.

Its subcellular location is the glycosome. The enzyme catalyses IMP + NH4(+) + NADP(+) = GMP + NADPH + 2 H(+). Its activity is regulated as follows. Activated by GTP and inhibited by ATP and IMP. Mycophenolic acid (MPA) is a competitive inhibitor of the enzyme with respect to NADPH. Functionally, catalyzes the irreversible NADPH-dependent deamination of GMP to IMP. It functions in the conversion of nucleobase, nucleoside and nucleotide derivatives of G to A nucleotides, and in maintaining the intracellular balance of A and G nucleotides. This chain is GMP reductase, found in Leishmania major.